A 164-amino-acid polypeptide reads, in one-letter code: Ion-translocating oxidoreductase complex subunit G (164 aa).

FMN phosphoryl threonine is present on Thr125.

The protein belongs to the RnfG family. As to quaternary structure, the complex is composed of six subunits: RnfA, RnfB, RnfC, RnfD, RnfE and RnfG. FMN serves as cofactor.

Functionally, part of a membrane-bound complex that couples electron transfer with translocation of ions across the membrane. In Buchnera aphidicola subsp. Acyrthosiphon pisum (strain APS) (Acyrthosiphon pisum symbiotic bacterium), this protein is Ion-translocating oxidoreductase complex subunit G.